The primary structure comprises 617 residues: V-type proton ATPase catalytic subunit A (617 aa).

ATP is bound at residue 257–264; the sequence is GAFGCGKT.

The protein belongs to the ATPase alpha/beta chains family. As to quaternary structure, V-ATPase is a heteromultimeric enzyme composed of a peripheral catalytic V1 complex (components A to H) attached to an integral membrane V0 proton pore complex (components: a, c, c', c'', d, e, f and VOA1). Is a probable target for sumoylation.

It localises to the vacuole membrane. It carries out the reaction ATP + H2O + 4 H(+)(in) = ADP + phosphate + 5 H(+)(out). Its function is as follows. Catalytic subunit of the V1 complex of vacuolar(H+)-ATPase (V-ATPase), a multisubunit enzyme composed of a peripheral complex (V1) that hydrolyzes ATP and a membrane integral complex (V0) that translocates protons. V-ATPase is responsible for acidifying and maintaining the pH of intracellular compartments. Mediates oxidative stress response, filamentous growth, and plays an important role in virulence. The polypeptide is V-type proton ATPase catalytic subunit A (Candida albicans (strain SC5314 / ATCC MYA-2876) (Yeast)).